The sequence spans 212 residues: Peptide methionine sulfoxide reductase MsrA (212 aa).

Residue Cys-52 is part of the active site.

The protein belongs to the MsrA Met sulfoxide reductase family.

The enzyme catalyses L-methionyl-[protein] + [thioredoxin]-disulfide + H2O = L-methionyl-(S)-S-oxide-[protein] + [thioredoxin]-dithiol. The catalysed reaction is [thioredoxin]-disulfide + L-methionine + H2O = L-methionine (S)-S-oxide + [thioredoxin]-dithiol. In terms of biological role, has an important function as a repair enzyme for proteins that have been inactivated by oxidation. Catalyzes the reversible oxidation-reduction of methionine sulfoxide in proteins to methionine. This Salmonella newport (strain SL254) protein is Peptide methionine sulfoxide reductase MsrA.